Here is a 457-residue protein sequence, read N- to C-terminus: Cysteine--tRNA ligase (457 aa).

Cys-31 serves as a coordination point for Zn(2+). The 'HIGH' region signature appears at 33-43 (PTVYNYAHIGN). Residues Cys-211, His-236, and Glu-240 each contribute to the Zn(2+) site. A 'KMSKS' region motif is present at residues 269–273 (KMSKS). An ATP-binding site is contributed by Lys-272.

It belongs to the class-I aminoacyl-tRNA synthetase family. In terms of assembly, monomer. It depends on Zn(2+) as a cofactor.

Its subcellular location is the cytoplasm. The enzyme catalyses tRNA(Cys) + L-cysteine + ATP = L-cysteinyl-tRNA(Cys) + AMP + diphosphate. This is Cysteine--tRNA ligase from Xanthomonas campestris pv. campestris (strain ATCC 33913 / DSM 3586 / NCPPB 528 / LMG 568 / P 25).